Consider the following 89-residue polypeptide: Large ribosomal subunit protein bL27 (89 aa).

The interval 1–24 (MAHKKGTGSTRNGRDSRSQRLGVK) is disordered.

This sequence belongs to the bacterial ribosomal protein bL27 family.

The sequence is that of Large ribosomal subunit protein bL27 from Microcystis aeruginosa (strain NIES-843 / IAM M-2473).